The primary structure comprises 280 residues: Inner membrane ABC transporter permease protein YcjP (280 aa).

Residues 1–10 lie on the Cytoplasmic side of the membrane; the sequence is MATNKRTLSR. Residues 11–31 form a helical membrane-spanning segment; it reads IGFYCGLALFLIITLFPFFVM. Residues 32–53 lie on the Periplasmic side of the membrane; the sequence is LMTSFKGAKEAISLHPTLLPQQ. Residues 54–74 form a helical membrane-spanning segment; that stretch reads WTLEHYVDIFNPMIFPFVDYF. The 192-residue stretch at 74–265 folds into the ABC transmembrane type-1 domain; the sequence is FRNSLVVSVV…LPVVIMYALS (192 aa). Over 75-77 the chain is Cytoplasmic; the sequence is RNS. The helical transmembrane segment at 78 to 98 threads the bilayer; the sequence is LVVSVVSSVVAVFLGILGAYA. Residues 99–117 lie on the Periplasmic side of the membrane; it reads LSRLRFKGRMTINASFYTV. Residues 118–138 traverse the membrane as a helical segment; that stretch reads YMFSGILLVVPLFKIITALGI. The Cytoplasmic segment spans residues 139-140; sequence YD. A helical transmembrane segment spans residues 141-161; it reads TEMALIITMVTQTLPTAVFML. The Periplasmic portion of the chain corresponds to 162 to 189; sequence KSYFDTIPDEIEEAAMMDGLNRLQIIFR. A helical transmembrane segment spans residues 190–210; that stretch reads ITVPLAMSGLISVFVYCFMVA. The Cytoplasmic segment spans residues 211–214; it reads WNDY. The helical transmembrane segment at 215-235 threads the bilayer; sequence LFASIFLSSASNFTLPVGLNA. Over 236–242 the chain is Periplasmic; the sequence is LFSTPDY. The helical transmembrane segment at 243–263 threads the bilayer; that stretch reads IWGRMMAASLVTALPVVIMYA. Residues 264–280 lie on the Cytoplasmic side of the membrane; sequence LSERFIKSGLTAGGVKG.

This sequence belongs to the binding-protein-dependent transport system permease family. MalFG subfamily.

Its subcellular location is the cell inner membrane. Functionally, probably part of the binding-protein-dependent transport system YcjNOP. Probably responsible for the translocation of the substrate across the membrane. The polypeptide is Inner membrane ABC transporter permease protein YcjP (ycjP) (Escherichia coli (strain K12)).